A 428-amino-acid chain; its full sequence is Enolase (428 aa).

Gln163 is a binding site for (2R)-2-phosphoglycerate. Glu205 acts as the Proton donor in catalysis. Residues Asp242, Glu285, and Asp312 each coordinate Mg(2+). Lys337, Arg366, Ser367, and Lys388 together coordinate (2R)-2-phosphoglycerate. Lys337 functions as the Proton acceptor in the catalytic mechanism.

This sequence belongs to the enolase family. Mg(2+) is required as a cofactor.

Its subcellular location is the cytoplasm. It is found in the secreted. It localises to the cell surface. The catalysed reaction is (2R)-2-phosphoglycerate = phosphoenolpyruvate + H2O. It functions in the pathway carbohydrate degradation; glycolysis; pyruvate from D-glyceraldehyde 3-phosphate: step 4/5. Functionally, catalyzes the reversible conversion of 2-phosphoglycerate (2-PG) into phosphoenolpyruvate (PEP). It is essential for the degradation of carbohydrates via glycolysis. This chain is Enolase, found in Rhodopirellula baltica (strain DSM 10527 / NCIMB 13988 / SH1).